The chain runs to 838 residues: Alpha-glucan phosphorylase, H isozyme (838 aa).

Positions 1–21 (MEGGAKSNDVSAAPIAQPLSE) are disordered. Lys-684 is modified (N6-(pyridoxal phosphate)lysine).

Belongs to the glycogen phosphorylase family. Pyridoxal 5'-phosphate is required as a cofactor.

It is found in the cytoplasm. It catalyses the reaction [(1-&gt;4)-alpha-D-glucosyl](n) + phosphate = [(1-&gt;4)-alpha-D-glucosyl](n-1) + alpha-D-glucose 1-phosphate. Phosphorylase is an important allosteric enzyme in carbohydrate metabolism. Enzymes from different sources differ in their regulatory mechanisms and in their natural substrates. However, all known phosphorylases share catalytic and structural properties. This is Alpha-glucan phosphorylase, H isozyme from Solanum tuberosum (Potato).